The primary structure comprises 736 residues: DNA topoisomerase 1 (736 aa).

The region spanning K2–I113 is the Toprim domain. 2 residues coordinate Mg(2+): E8 and D82. The Topo IA-type catalytic domain occupies D129 to I552. Positions S163–Q168 are interaction with DNA. The active-site O-(5'-phospho-DNA)-tyrosine intermediate is Y297. C4-type zinc fingers lie at residues C572–C598, C616–C642, C663–C689, and C702–C725.

The protein belongs to the type IA topoisomerase family. As to quaternary structure, monomer. Mg(2+) is required as a cofactor.

It carries out the reaction ATP-independent breakage of single-stranded DNA, followed by passage and rejoining.. In terms of biological role, releases the supercoiling and torsional tension of DNA, which is introduced during the DNA replication and transcription, by transiently cleaving and rejoining one strand of the DNA duplex. Introduces a single-strand break via transesterification at a target site in duplex DNA. The scissile phosphodiester is attacked by the catalytic tyrosine of the enzyme, resulting in the formation of a DNA-(5'-phosphotyrosyl)-enzyme intermediate and the expulsion of a 3'-OH DNA strand. The free DNA strand then undergoes passage around the unbroken strand, thus removing DNA supercoils. Finally, in the religation step, the DNA 3'-OH attacks the covalent intermediate to expel the active-site tyrosine and restore the DNA phosphodiester backbone. The protein is DNA topoisomerase 1 of Helicobacter pylori (strain J99 / ATCC 700824) (Campylobacter pylori J99).